The primary structure comprises 922 residues: Ubiquitin carboxyl-terminal hydrolase 29 (922 aa).

The segment at 160 to 196 (GILENQGGKGQNTLSSDVQTNEDILKEDNPVPNKKYK) is disordered. Positions 170 to 181 (QNTLSSDVQTNE) are enriched in polar residues. The 601-residue stretch at 285–885 (QGFPNLGNTC…SGYIFFYMHN (601 aa)) folds into the USP domain. Cys294 serves as the catalytic Nucleophile. His840 acts as the Proton acceptor in catalysis.

Belongs to the peptidase C19 family.

It localises to the cytoplasm. The protein localises to the perinuclear region. It catalyses the reaction Thiol-dependent hydrolysis of ester, thioester, amide, peptide and isopeptide bonds formed by the C-terminal Gly of ubiquitin (a 76-residue protein attached to proteins as an intracellular targeting signal).. In terms of biological role, deubiquitinase involved in innate antiviral immunity by mediating 'Lys-48'-linked deubiquitination of CGAS, thereby promoting its stabilization. The sequence is that of Ubiquitin carboxyl-terminal hydrolase 29 from Homo sapiens (Human).